The sequence spans 624 residues: 1-deoxy-D-xylulose-5-phosphate synthase (624 aa).

Thiamine diphosphate is bound by residues His74 and 115–117; that span reads GHS. Residue Asp146 participates in Mg(2+) binding. Thiamine diphosphate-binding positions include 147–148, Asn175, Tyr286, and Glu366; that span reads GA. Asn175 serves as a coordination point for Mg(2+).

It belongs to the transketolase family. DXPS subfamily. Homodimer. Mg(2+) serves as cofactor. The cofactor is thiamine diphosphate.

It carries out the reaction D-glyceraldehyde 3-phosphate + pyruvate + H(+) = 1-deoxy-D-xylulose 5-phosphate + CO2. It functions in the pathway metabolic intermediate biosynthesis; 1-deoxy-D-xylulose 5-phosphate biosynthesis; 1-deoxy-D-xylulose 5-phosphate from D-glyceraldehyde 3-phosphate and pyruvate: step 1/1. Its function is as follows. Catalyzes the acyloin condensation reaction between C atoms 2 and 3 of pyruvate and glyceraldehyde 3-phosphate to yield 1-deoxy-D-xylulose-5-phosphate (DXP). This chain is 1-deoxy-D-xylulose-5-phosphate synthase, found in Clostridium kluyveri (strain NBRC 12016).